A 634-amino-acid chain; its full sequence is MTVDTDKQTLGFQTEVKQLLQLMIHSLYSNKEIFLRELVSNAADAADKLRFEALVKPELLEGSGELRIRVDYDKDARTVTIDDNGIGMSREDAVSHLGTIAKSGTADFLKHLSGDQKKDANLIGQFGVGFYSAFIVADQVDVYSRRAGLPAREGVHWSSRGEGEFEVASVDKPERGTRIVLHLKDGEDTFADGWTLRGILKKYSDHIGLPIEMRKEHYGEAADKPAEPEWEAVNRASALWTRPKSEIKDEEYQEFYKHIAHDAGNPLAWSHNKVEGKLEYTSLLFVPGRAPFDLYHRDSAKGLKLYVQRVFIMDQAEQFLPLYLRFIKGVVDSSDLSLNVSREILQSGPVVDSMKSALTKRSLDMLEKLAKDKPDDYATFWRNFGQALKEGPAEDYANREKIAGLMRFSSTHDTTGAQSVGLADYVSRLAEGQDKLYYLTGESYAQIKDSPHLEVFRKKGIEVLLLTDRIDEWLMSYLTEFDGKSFVDVARGDLDLGKLDSEEDKKAQEEVAKSKEGLASRIKAALGEDVAEVRVSHRLTDSPAILAIGQGDLGLQMRQLLEASGQAVPESKPVFEFNPTHPLIEKLDAEQDMDRFCDLSQVLFDQAALAAGDSLKDPAGYVKRLNKLLLELSV.

An a; substrate-binding region spans residues 1–342 (MTVDTDKQTL…SSDLSLNVSR (342 aa)). The segment at 343–559 (EILQSGPVVD…QGDLGLQMRQ (217 aa)) is b. A c region spans residues 560–634 (LLEASGQAVP…LNKLLLELSV (75 aa)).

This sequence belongs to the heat shock protein 90 family. Homodimer.

Its subcellular location is the cytoplasm. Its function is as follows. Molecular chaperone. Has ATPase activity. This chain is Chaperone protein HtpG, found in Xanthomonas oryzae pv. oryzae (strain MAFF 311018).